The sequence spans 273 residues: Karrikin insensitive 2 receptor B (273 aa).

Catalysis depends on S95, which acts as the Nucleophile. D217 is a catalytic residue.

Belongs to the AB hydrolase superfamily. In terms of tissue distribution, expressed in stigma.

It is found in the nucleus. Its subcellular location is the cytoplasm. Functionally, may be involved in plant olfaction during volatile communication. The polypeptide is Karrikin insensitive 2 receptor B (Petunia hybrida (Petunia)).